A 346-amino-acid polypeptide reads, in one-letter code: NADP-dependent alcohol dehydrogenase C (346 aa).

Positions 41, 63, 94, 97, 100, 108, and 158 each coordinate Zn(2+).

The protein belongs to the zinc-containing alcohol dehydrogenase family. Zn(2+) serves as cofactor.

It carries out the reaction a primary alcohol + NADP(+) = an aldehyde + NADPH + H(+). This Mycobacterium bovis (strain ATCC BAA-935 / AF2122/97) protein is NADP-dependent alcohol dehydrogenase C (adhC).